Consider the following 457-residue polypeptide: uncharacterized protein (457 aa).

A run of 2 helical transmembrane segments spans residues 1–21 and 250–270; these read MVSS…MTLL and ILIV…ATTF.

The protein localises to the membrane. This is an uncharacterized protein from Saccharomyces cerevisiae (strain ATCC 204508 / S288c) (Baker's yeast).